A 445-amino-acid chain; its full sequence is Histone acetyltransferase ESA1 (445 aa).

At S17 the chain carries Phosphoserine. Positions 22-74 constitute a Tudor-knot domain; it reads IIKCQCWVQKNDEERLAEILSINTRKAPPKFYVHYVNYNKRLDEWITTDRINL. A disordered region spans residues 88–114; sequence EDNKKQKKKKATNTSETPQDSLQDGVD. A compositionally biased stretch (polar residues) spans 99–109; the sequence is TNTSETPQDSL. Positions 162 to 433 constitute an MYST-type HAT domain; it reads ARVRNLNRII…IDPNRLIWKP (272 aa). A C2HC MYST-type; degenerate zinc finger spans residues 195–220; the sequence is IYIDDFTLQYFGSKKQYERYRKKCTL. The ESA1-RPD3 motif signature appears at 245–266; it reads RTWCRNLCLLSKLFLDHKTLYY. K262 is modified (N6-acetyllysine; by autocatalysis). Acetyl-CoA contacts are provided by residues 303 to 307 and 312 to 318; these read ACILT and QRMGYGK. Residue E338 is the Proton donor/acceptor of the active site. Position 342 (S342) interacts with acetyl-CoA.

Belongs to the MYST (SAS/MOZ) family. In terms of assembly, component of the NuA4 histone acetyltransferase complex composed of at least ACT1, ARP4, EAF3, EAF5, EAF6, EAF7, EPL1, ESA1, SWC4, TRA1, VID21, YAF9 and YNG2. The complex interacts with histones H4 (HHF1 and HHF2), H3 (HHT1 and HHT2) and H2A (HTA1 and HTA2). Autoacetylation at Lys-262 is required for proper function.

It carries out the reaction L-lysyl-[histone] + acetyl-CoA = N(6)-acetyl-L-lysyl-[histone] + CoA + H(+). The catalysed reaction is L-lysyl-[protein] + acetyl-CoA = N(6)-acetyl-L-lysyl-[protein] + CoA + H(+). The enzyme catalyses 2-hydroxyisobutanoyl-CoA + L-lysyl-[protein] = N(6)-(2-hydroxyisobutanoyl)-L-lysyl-[protein] + CoA + H(+). It catalyses the reaction (2E)-butenoyl-CoA + L-lysyl-[protein] = N(6)-(2E)-butenoyl-L-lysyl-[protein] + CoA + H(+). Its function is as follows. Catalytic component of the NuA4 histone acetyltransferase (HAT), a multiprotein complex involved in epigenetic transcriptional activation of selected genes principally by acetylation of nucleosomal histones H4, H3, H2B, H2A and H2A variant H2A.Z. Acetylates histone H4 to form H4K5ac, H4K8ac, H4K12ac and H4K16ac, histone H3 to form H3K14ac, histone H2B to form H2BK16ac, histone H2A to form H2AK4ac and H2AK7ac, and histone variant H2A.Z to form H2A.ZK14ac. Acetylation of histones gives a specific tag for epigenetic transcription initiation and elongation. Acetylation of histone H4 is essential for DNA double-strand break repair through homologous recombination. Involved in cell cycle progression. Recruitment to promoters depends on H3K4me. Also acetylates non-histone proteins, such as ATG3 and PAH1. Regulates autophagy by acetylating ATG3, controlling interaction the interaction between ATG3 and ATG8 and ATG8 lipidation. Acts as a regulator of fatty-acid-induced triacylglycerol synthesis by catalyzing acetylation of PAH1, thereby promoting the synthesis of diacylglycerol. In addition to protein acetyltransferase, can use different acyl-CoA substrates, such as 2-hydroxyisobutanoyl-CoA (2-hydroxyisobutyryl-CoA) or (2E)-butenoyl-CoA (crotonyl-CoA), and is able to mediate protein 2-hydroxyisobutyrylation and crotonylation, respectively. Catalyzes histone crotonylation. This is Histone acetyltransferase ESA1 from Saccharomyces cerevisiae (strain ATCC 204508 / S288c) (Baker's yeast).